The chain runs to 469 residues: Protein nucleotidyltransferase YdiU (469 aa).

Residues glycine 80, glycine 82, arginine 83, lysine 103, aspartate 115, glycine 116, arginine 166, and arginine 173 each contribute to the ATP site. The active-site Proton acceptor is aspartate 243. Mg(2+) contacts are provided by asparagine 244 and aspartate 253. Aspartate 253 contacts ATP.

Belongs to the SELO family. It depends on Mg(2+) as a cofactor. Mn(2+) serves as cofactor.

The enzyme catalyses L-seryl-[protein] + ATP = 3-O-(5'-adenylyl)-L-seryl-[protein] + diphosphate. The catalysed reaction is L-threonyl-[protein] + ATP = 3-O-(5'-adenylyl)-L-threonyl-[protein] + diphosphate. It catalyses the reaction L-tyrosyl-[protein] + ATP = O-(5'-adenylyl)-L-tyrosyl-[protein] + diphosphate. It carries out the reaction L-histidyl-[protein] + UTP = N(tele)-(5'-uridylyl)-L-histidyl-[protein] + diphosphate. The enzyme catalyses L-seryl-[protein] + UTP = O-(5'-uridylyl)-L-seryl-[protein] + diphosphate. The catalysed reaction is L-tyrosyl-[protein] + UTP = O-(5'-uridylyl)-L-tyrosyl-[protein] + diphosphate. In terms of biological role, nucleotidyltransferase involved in the post-translational modification of proteins. It can catalyze the addition of adenosine monophosphate (AMP) or uridine monophosphate (UMP) to a protein, resulting in modifications known as AMPylation and UMPylation. The polypeptide is Protein nucleotidyltransferase YdiU (Pseudoalteromonas translucida (strain TAC 125)).